The chain runs to 227 residues: MKAVILLSGGLDSSTILYQAKADGCECYSISFDYQQRHRRELHSAFLVAQTAGIVQHQVVNFDLRLWGGSALTDDKIDLPQERSVDAMSQNIPVTYVPARNTIFLSFALAYAEAIAAERVYIGVNALDYSGYPDCRPDYIEAMQEVFRLGTKQGREGQPINIVAPLINLKKTAIIQLGNQLGVPWNLTWSCYNGGDVACGVCDSCRLRLAAFAELGLEDPLPYLKGV.

Residue 7–17 coordinates ATP; it reads LSGGLDSSTIL. The Zn(2+) site is built by cysteine 191, cysteine 199, cysteine 202, and cysteine 205.

The protein belongs to the QueC family. Requires Zn(2+) as cofactor.

The catalysed reaction is 7-carboxy-7-deazaguanine + NH4(+) + ATP = 7-cyano-7-deazaguanine + ADP + phosphate + H2O + H(+). Its pathway is purine metabolism; 7-cyano-7-deazaguanine biosynthesis. In terms of biological role, catalyzes the ATP-dependent conversion of 7-carboxy-7-deazaguanine (CDG) to 7-cyano-7-deazaguanine (preQ(0)). The chain is 7-cyano-7-deazaguanine synthase from Trichormus variabilis (strain ATCC 29413 / PCC 7937) (Anabaena variabilis).